Reading from the N-terminus, the 239-residue chain is Peptidyl-tRNA hydrolase (239 aa).

Y14 is a binding site for tRNA. H19 functions as the Proton acceptor in the catalytic mechanism. TRNA contacts are provided by F64, N66, and N112. The tract at residues 188-239 is disordered; the sequence is APPRSSTSKPKAQDNREDAAQAAEERSETRTPPEARPEDTRSALQKLADKFR. Over residues 198–239 the composition is skewed to basic and acidic residues; sequence KAQDNREDAAQAAEERSETRTPPEARPEDTRSALQKLADKFR.

This sequence belongs to the PTH family. As to quaternary structure, monomer.

It localises to the cytoplasm. The enzyme catalyses an N-acyl-L-alpha-aminoacyl-tRNA + H2O = an N-acyl-L-amino acid + a tRNA + H(+). Functionally, hydrolyzes ribosome-free peptidyl-tRNAs (with 1 or more amino acids incorporated), which drop off the ribosome during protein synthesis, or as a result of ribosome stalling. In terms of biological role, catalyzes the release of premature peptidyl moieties from peptidyl-tRNA molecules trapped in stalled 50S ribosomal subunits, and thus maintains levels of free tRNAs and 50S ribosomes. The protein is Peptidyl-tRNA hydrolase of Jannaschia sp. (strain CCS1).